Reading from the N-terminus, the 681-residue chain is Phosphomethylpyrimidine synthase (681 aa).

Polar residues predominate over residues 1 to 13 (MSNNTTSLPAENS). The tract at residues 1–29 (MSNNTTSLPAENSSHPRKGTPIRKKQREE) is disordered. Over residues 15–25 (HPRKGTPIRKK) the composition is skewed to basic residues. Residues Asn254, Met283, Tyr312, His348, 368-370 (SRG), 409-412 (DGLR), and Glu448 contribute to the substrate site. His452 is a Zn(2+) binding site. Substrate is bound at residue Tyr475. His516 serves as a coordination point for Zn(2+). Cys596, Cys599, and Cys604 together coordinate [4Fe-4S] cluster. Positions 658–667 (FRSRGSELYH) are enriched in basic and acidic residues. The segment at 658–681 (FRSRGSELYHRPANLSAEANNEPT) is disordered.

This sequence belongs to the ThiC family. Homodimer. [4Fe-4S] cluster is required as a cofactor.

The enzyme catalyses 5-amino-1-(5-phospho-beta-D-ribosyl)imidazole + S-adenosyl-L-methionine = 4-amino-2-methyl-5-(phosphooxymethyl)pyrimidine + CO + 5'-deoxyadenosine + formate + L-methionine + 3 H(+). The protein operates within cofactor biosynthesis; thiamine diphosphate biosynthesis. Its function is as follows. Catalyzes the synthesis of the hydroxymethylpyrimidine phosphate (HMP-P) moiety of thiamine from aminoimidazole ribotide (AIR) in a radical S-adenosyl-L-methionine (SAM)-dependent reaction. This is Phosphomethylpyrimidine synthase from Yersinia pseudotuberculosis serotype I (strain IP32953).